Here is a 471-residue protein sequence, read N- to C-terminus: Glutamate--tRNA ligase (471 aa).

The 'HIGH' region signature appears at 9–19; that stretch reads PSPTGYLHVGG. Zn(2+) is bound by residues Cys98, Cys100, Cys125, and His127. Positions 237–241 match the 'KMSKS' region motif; it reads KLSKR. ATP is bound at residue Lys240.

It belongs to the class-I aminoacyl-tRNA synthetase family. Glutamate--tRNA ligase type 1 subfamily. In terms of assembly, monomer. Zn(2+) is required as a cofactor.

It is found in the cytoplasm. The enzyme catalyses tRNA(Glu) + L-glutamate + ATP = L-glutamyl-tRNA(Glu) + AMP + diphosphate. Catalyzes the attachment of glutamate to tRNA(Glu) in a two-step reaction: glutamate is first activated by ATP to form Glu-AMP and then transferred to the acceptor end of tRNA(Glu). This is Glutamate--tRNA ligase from Escherichia coli O157:H7.